The following is a 297-amino-acid chain: Large ribosomal subunit protein uL15m (297 aa).

A mitochondrion-targeting transit peptide spans 1 to 21 (MSGNGVHGVHGALQLLRSLPK). Residues 23 to 69 (SLANLRPNPGSKKPERRRGRGRYRGRKCGRGHKGERQRGNRPRLGFE) form a disordered region. Residues 36 to 53 (PERRRGRGRYRGRKCGRG) are compositionally biased toward basic residues.

Belongs to the universal ribosomal protein uL15 family. In terms of assembly, component of the mitochondrial ribosome large subunit (39S) which comprises a 16S rRNA and about 50 distinct proteins.

The protein localises to the mitochondrion. The chain is Large ribosomal subunit protein uL15m (MRPL15) from Gallus gallus (Chicken).